The sequence spans 384 residues: Dual-specificity RNA methyltransferase RlmN (384 aa).

E93 (proton acceptor) is an active-site residue. A Radical SAM core domain is found at 99–339 (EDTRGTLCVS…TTIRKTRGDD (241 aa)). A disulfide bridge links C106 with C344. Residues C113, C117, and C120 each coordinate [4Fe-4S] cluster. Residues 170–171 (GE), S202, 224–226 (SLH), and N301 each bind S-adenosyl-L-methionine. Catalysis depends on C344, which acts as the S-methylcysteine intermediate.

Belongs to the radical SAM superfamily. RlmN family. Requires [4Fe-4S] cluster as cofactor.

It is found in the cytoplasm. It carries out the reaction adenosine(2503) in 23S rRNA + 2 reduced [2Fe-2S]-[ferredoxin] + 2 S-adenosyl-L-methionine = 2-methyladenosine(2503) in 23S rRNA + 5'-deoxyadenosine + L-methionine + 2 oxidized [2Fe-2S]-[ferredoxin] + S-adenosyl-L-homocysteine. The catalysed reaction is adenosine(37) in tRNA + 2 reduced [2Fe-2S]-[ferredoxin] + 2 S-adenosyl-L-methionine = 2-methyladenosine(37) in tRNA + 5'-deoxyadenosine + L-methionine + 2 oxidized [2Fe-2S]-[ferredoxin] + S-adenosyl-L-homocysteine. Specifically methylates position 2 of adenine 2503 in 23S rRNA and position 2 of adenine 37 in tRNAs. m2A2503 modification seems to play a crucial role in the proofreading step occurring at the peptidyl transferase center and thus would serve to optimize ribosomal fidelity. The sequence is that of Dual-specificity RNA methyltransferase RlmN from Cupriavidus metallidurans (strain ATCC 43123 / DSM 2839 / NBRC 102507 / CH34) (Ralstonia metallidurans).